The following is a 308-amino-acid chain: Methionine synthase (308 aa).

Zn(2+) is bound by residues H192, C194, E215, and C282.

It belongs to the archaeal MetE family. The cofactor is Zn(2+).

It functions in the pathway amino-acid biosynthesis; L-methionine biosynthesis via de novo pathway. In terms of biological role, catalyzes the transfer of a methyl group to L-homocysteine resulting in methionine formation. Can use methylcobalamin and methylcobinamide as methyl donors, but methylcobalamin is not considered to be the physiological substrate. This Methanocaldococcus jannaschii (strain ATCC 43067 / DSM 2661 / JAL-1 / JCM 10045 / NBRC 100440) (Methanococcus jannaschii) protein is Methionine synthase.